A 647-amino-acid polypeptide reads, in one-letter code: MSKASLSPNVEDLKKKQIRQYKEIIRISKAQSIRIKELQLENERLLSENIDLRTTAINLEEQLETVQNENEENKTKLAALLNRFHEETDNFLSKLSLCQQEIQDTFKPVEANLAYDVDTDSEDLDEESVVKDTEEIIEQAQHDVSLRNLSGIEDENIIDDGETAINEQKKREANVFSDTQSAPQLKSGKALPADFENPYNLSNSKPVNNNNEDRVEAVTSENKSIDSAPQEKNHEYEIVSPKSLSNKINNQAAAQRRTEEDNANGVAQEENEGSQEAHFHSRIQSDTVIQSTPTKRKWDVDIQNKQINLASAATNVTGYVSETDSRPNRANSLDSAVLLVQSSNKSNRNGHHISDPNLNSSISLKFAPEDTAHNSLTSQENVGPQVTTTSLSNMTVAESPRTDTPREINGLVDSSVTNGNEKFSVEIMNDSNKIGLNPKSFTDEEREILTLFRNPPMRLSSEPPSSNGFSIAHPNNSPLRPPSLQGILNAEDRPYEIEPSRSSFATNDTGSYNNLELLSSVTNLKSPNENDRVTKTQSRRETKVKRRRKARIQETSEESTVVNEPNEKPDGRSRRERKKVNYALPGLRTKLRRNFDLPSDHVKAKKTRRAPKNSENDSATKTETANITSEAPTTSEVTLENSETLNL.

S7 carries the phosphoserine modification. Coiled coils occupy residues 28–87 and 125–145; these read SKAQ…FHEE and DEES…HDVS. Residues 171–295 form a disordered region; the sequence is REANVFSDTQ…DTVIQSTPTK (125 aa). A compositionally biased stretch (low complexity) spans 200 to 210; that stretch reads NLSNSKPVNNN. Residue S240 is modified to Phosphoserine. 2 stretches are compositionally biased toward polar residues: residues 242–253 and 282–293; these read KSLSNKINNQAA and RIQSDTVIQSTP. T292 carries the phosphothreonine modification. A phosphoserine mark is found at S332 and S335. Polar residues-rich tracts occupy residues 375-396 and 462-478; these read SLTS…NMTV and EPPS…NNSP. Disordered stretches follow at residues 375–416, 453–486, 522–579, and 593–647; these read SLTS…DSSV, RNPP…SLQG, TNLK…ERKK, and RNFD…TLNL. Composition is skewed to basic and acidic residues over residues 528–541 and 593–602; these read NEND…SRRE and RNFDLPSDHV. A compositionally biased stretch (polar residues) spans 621-647; it reads KTETANITSEAPTTSEVTLENSETLNL.

This sequence belongs to the shugoshin family.

It is found in the chromosome. The protein localises to the centromere. Involved in chromosome cohesion during mitosis and meiosis by preventing premature dissociation of cohesin complex from centromeres after prophase, when most of cohesin complex dissociates from chromosomes arms. Required for faithful mitotic chromosome segregation and proper kinetochore orientation during meiosis I. In contrast to sgo1, it is dispensable for centromeric protection of rec8 during meiosis I as well as protection of rad21 during mitosis. Required to sense the lack of tension at centromeres during mitosis. The chain is Shugoshin-2 (sgo2) from Schizosaccharomyces pombe (strain 972 / ATCC 24843) (Fission yeast).